The primary structure comprises 569 residues: Peroxisomal targeting signal receptor (569 aa).

Residue C5 forms a Glycyl cysteine thioester (Cys-Gly) (interchain with G-Cter in ubiquitin) linkage. Residues 6 to 28 form an amphipathic helix 1 (AH1) region; sequence SVGANPLAQLNKRVQQDRTLQHG. A Glycyl lysine isopeptide (Lys-Gly) (interchain with G-Cter in ubiquitin) cross-link involves residue K17. The amphipathic helix 2 (AH2) stretch occupies residues 53–71; sequence KFQMEQFMAGKASSGGNMF. Positions 112–116 match the WxxxF/Y motif 1 motif; the sequence is WSQEF. An amphipathic helix 3 (AH3) region spans residues 150–154; it reads PMNMM. The WxxxF/Y motif 2 signature appears at 181 to 185; sequence WEQQF. The tract at residues 229–245 is amphipathic helix 4 (AH4); sequence FQQIWNDIHDQTDDLDS. 5 TPR repeats span residues 281–315, 316–349, 417–450, 452–484, and 486–518; these read NTDA…DPGH, VDAW…DPHN, PDVQ…RPDD, CMWN…KPTF, and RARY…HEVE.

Belongs to the peroxisomal targeting signal receptor family. In terms of assembly, interacts (via WxxxF/Y and LVxEF motifs) with PEX14; promoting translocation through the PEX13-PEX14 docking complex. Monoubiquitinated at Cys-5 by PEX2 during PEX5 passage through the retrotranslocation channel: monoubiquitination acts as a signal for PEX5 extraction and is required for proper export from peroxisomes and recycling. When PEX5 recycling is compromised, polyubiquitinated at Lys-17 by PEX10 during its passage through the retrotranslocation channel, leading to its degradation.

The protein localises to the cytoplasm. Its subcellular location is the cytosol. It is found in the peroxisome matrix. Its function is as follows. Receptor that mediates peroxisomal import of proteins containing a C-terminal PTS1-type tripeptide peroxisomal targeting signal (SKL-type). Binds to cargo proteins containing a PTS1 peroxisomal targeting signal in the cytosol, and translocates them into the peroxisome matrix by passing through the PEX13-PEX14 docking complex along with cargo proteins. PEX5 receptor is then retrotranslocated into the cytosol, leading to release of bound cargo in the peroxisome matrix, and reset for a subsequent peroxisome import cycle. This chain is Peroxisomal targeting signal receptor (PEX5), found in Eremothecium gossypii (strain ATCC 10895 / CBS 109.51 / FGSC 9923 / NRRL Y-1056) (Yeast).